A 236-amino-acid polypeptide reads, in one-letter code: THO complex subunit 7B (236 aa).

Positions Glu-99–Asn-228 form a coiled coil.

Belongs to the THOC7 family. In terms of assembly, component of the THO complex, which is composed of THO1, THO2, THO3, THO5, THO6 and THO7.

It localises to the nucleus. In terms of biological role, acts as a component of the THO subcomplex of the TREX complex which is thought to couple mRNA transcription, processing and nuclear export. This is THO complex subunit 7B (THO7B) from Arabidopsis thaliana (Mouse-ear cress).